Reading from the N-terminus, the 242-residue chain is Cytochrome c oxidase subunit 2 (242 aa).

Residues 7–33 lie on the Mitochondrial intermembrane side of the membrane; it reads DVPVPYGLYFQDSATPTFDGIIELHDI. A helical transmembrane segment spans residues 34–55; sequence VMFYIVVTIVLVSYLLFVIIKN. Topologically, residues 56–73 are mitochondrial matrix; the sequence is FSNDHISYKYLTHGTTLE. A helical membrane pass occupies residues 74–98; it reads IVWTIFPVVILLFIAFPSFILLYLC. The Mitochondrial intermembrane segment spans residues 99 to 242; it reads DEVIDPAMTI…DKFLSWLDEQ (144 aa). Cu cation-binding residues include H177, C212, E214, C216, H220, and M223. E214 contributes to the Mg(2+) binding site.

The protein belongs to the cytochrome c oxidase subunit 2 family. Component of the cytochrome c oxidase (complex IV, CIV), a multisubunit enzyme composed of a catalytic core of 3 subunits and several supernumerary subunits. The complex exists as a monomer or a dimer and forms supercomplexes (SCs) in the inner mitochondrial membrane with ubiquinol-cytochrome c oxidoreductase (cytochrome b-c1 complex, complex III, CIII). Requires Cu cation as cofactor. Post-translationally, the signal sequence of COX2 is processed by IMP1.

The protein localises to the mitochondrion inner membrane. It carries out the reaction 4 Fe(II)-[cytochrome c] + O2 + 8 H(+)(in) = 4 Fe(III)-[cytochrome c] + 2 H2O + 4 H(+)(out). Component of the cytochrome c oxidase, the last enzyme in the mitochondrial electron transport chain which drives oxidative phosphorylation. The respiratory chain contains 3 multisubunit complexes succinate dehydrogenase (complex II, CII), ubiquinol-cytochrome c oxidoreductase (cytochrome b-c1 complex, complex III, CIII) and cytochrome c oxidase (complex IV, CIV), that cooperate to transfer electrons derived from NADH and succinate to molecular oxygen, creating an electrochemical gradient over the inner membrane that drives transmembrane transport and the ATP synthase. Cytochrome c oxidase is the component of the respiratory chain that catalyzes the reduction of oxygen to water. Electrons originating from reduced cytochrome c in the intermembrane space (IMS) are transferred via the dinuclear copper A center (CU(A)) of subunit 2 and heme A of subunit 1 to the active site in subunit 1, a binuclear center (BNC) formed by heme A3 and copper B (CU(B)). The BNC reduces molecular oxygen to 2 water molecules using 4 electrons from cytochrome c in the IMS and 4 protons from the mitochondrial matrix. The protein is Cytochrome c oxidase subunit 2 (COX2) of Yarrowia lipolytica (strain CLIB 122 / E 150) (Yeast).